Reading from the N-terminus, the 265-residue chain is Thiazole synthase (265 aa).

Catalysis depends on Lys-103, which acts as the Schiff-base intermediate with DXP. 1-deoxy-D-xylulose 5-phosphate is bound by residues Gly-164, Ala-190–Gly-191, and Asn-212–Thr-213.

It belongs to the ThiG family. In terms of assembly, homotetramer. Forms heterodimers with either ThiH or ThiS.

It is found in the cytoplasm. It catalyses the reaction [ThiS sulfur-carrier protein]-C-terminal-Gly-aminoethanethioate + 2-iminoacetate + 1-deoxy-D-xylulose 5-phosphate = [ThiS sulfur-carrier protein]-C-terminal Gly-Gly + 2-[(2R,5Z)-2-carboxy-4-methylthiazol-5(2H)-ylidene]ethyl phosphate + 2 H2O + H(+). Its pathway is cofactor biosynthesis; thiamine diphosphate biosynthesis. In terms of biological role, catalyzes the rearrangement of 1-deoxy-D-xylulose 5-phosphate (DXP) to produce the thiazole phosphate moiety of thiamine. Sulfur is provided by the thiocarboxylate moiety of the carrier protein ThiS. In vitro, sulfur can be provided by H(2)S. The protein is Thiazole synthase of Bordetella avium (strain 197N).